The chain runs to 68 residues: Antimicrobial peptide UyCT3 (68 aa).

The N-terminal stretch at 1–23 (MKNQFVLLLLAIVFLQMIFQSDA) is a signal peptide. Phenylalanine amide is present on Phe-36. A propeptide spanning residues 40–68 (GLENMDKFDELFDGDLSEADLDFLKELMR) is cleaved from the precursor.

This sequence belongs to the non-disulfide-bridged peptide (NDBP) superfamily. Short antimicrobial peptide (group 4) family. The non-amidated UyCT3 does not show antimicrobial activity. Expressed by the venom gland.

Its subcellular location is the secreted. It is found in the target cell membrane. Antimicrobial peptide that inhibits the growth of Gram-positive (S.aureus, MIC=10 uM) and Gram-negative bacteria (E.coli, MIC=15 uM and P.aeruginosa, MIC=6 uM). It also shows 35% of hemolysis when 15 uM are tested (95% at 50 uM). The protein is Antimicrobial peptide UyCT3 of Urodacus yaschenkoi (Inland robust scorpion).